A 1307-amino-acid polypeptide reads, in one-letter code: Rho1 guanine nucleotide exchange factor TUS1 (1307 aa).

Residues 1-10 show a composition bias toward polar residues; that stretch reads MYRYNRSSPF. 3 disordered regions span residues 1-144, 164-194, and 219-239; these read MYRY…FIGN, PFAN…SDLR, and EDSE…NVSG. The span at 12-29 shows a compositional bias: basic and acidic residues; sequence RTPEKRVSRQESQRKSIE. The span at 37–79 shows a compositional bias: polar residues; the sequence is NTRNSFLDDSDNGTDNISIGWTPISDTQQFQSPVPQAFTFTSK. The segment covering 87 to 97 has biased composition (low complexity); the sequence is TSSSESTPKST. The segment covering 176 to 194 has biased composition (basic and acidic residues); sequence SPRDSSKQQAHFSDESDLR. One can recognise a DH domain in the interval 467-657; that stretch reads QRQSFIFDLI…EKLNFEVNQV (191 aa). In terms of domain architecture, PH spans 715 to 877; that stretch reads KLVLSGTVYK…WIDAIMESFK (163 aa). A disordered region spans residues 780-802; sequence TSKQPLRNYSQKEHKSPMHNFST. Residues 938–1279 enclose the CNH domain; the sequence is TTRILCCEDV…KLASSERREK (342 aa).

As to quaternary structure, interacts with RHO1.

Guanine nucleotide-exchange factor (GEF) for RHO1 that stimulates the exchange of RHO1 GDP-bound form into GTP-bound form. Required for signaling of cell wall defects to RHO1. This Saccharomyces cerevisiae (strain ATCC 204508 / S288c) (Baker's yeast) protein is Rho1 guanine nucleotide exchange factor TUS1 (TUS1).